Consider the following 189-residue polypeptide: Peptidyl-tRNA hydrolase (189 aa).

Tyr-15 contributes to the tRNA binding site. His-20 functions as the Proton acceptor in the catalytic mechanism. TRNA is bound by residues Phe-66, Asn-68, and Asn-114.

The protein belongs to the PTH family. In terms of assembly, monomer.

It localises to the cytoplasm. It carries out the reaction an N-acyl-L-alpha-aminoacyl-tRNA + H2O = an N-acyl-L-amino acid + a tRNA + H(+). Its function is as follows. Hydrolyzes ribosome-free peptidyl-tRNAs (with 1 or more amino acids incorporated), which drop off the ribosome during protein synthesis, or as a result of ribosome stalling. Catalyzes the release of premature peptidyl moieties from peptidyl-tRNA molecules trapped in stalled 50S ribosomal subunits, and thus maintains levels of free tRNAs and 50S ribosomes. The chain is Peptidyl-tRNA hydrolase from Streptococcus pneumoniae (strain Taiwan19F-14).